Consider the following 539-residue polypeptide: uncharacterized protein (539 aa).

5 helical membrane-spanning segments follow: residues 4–22, 27–46, 56–78, 90–112, and 155–177; these read LVEN…GLLL, IFGF…ALST, LIYV…PGFF, ALTL…VLNI, and PVVA…IAIF. 2 consecutive RCK C-terminal domains span residues 187-269 and 271-352; these read KEAE…AIGE and IDGD…LLGD. 4 helical membrane-spanning segments follow: residues 360-382, 422-444, 453-475, and 516-538; these read FNLL…EFPL, LALR…GAGF, SLTI…LFVG, and YTSV…LFLL.

It belongs to the AAE transporter (TC 2.A.81) family.

The protein resides in the cell membrane. This is an uncharacterized protein from Corynebacterium glutamicum (strain ATCC 13032 / DSM 20300 / JCM 1318 / BCRC 11384 / CCUG 27702 / LMG 3730 / NBRC 12168 / NCIMB 10025 / NRRL B-2784 / 534).